A 198-amino-acid polypeptide reads, in one-letter code: MDAILNYRSEDTEDYYTLLGCDELSSVEQILAEFKVRALECHPDKHPENPKAVETFQKLQKAKEILTNEESRARYDHWRRSQMSMPFQQWEALNDSVKTSMHWVVRGKKDLMLEESDKTHTTKMENEECNEQRERKKEELASTAEKTEQKEPKPLEKSVSPQNSDSSGFADVNGWHLRFRWSKDAPSELLRKFRNYEI.

Met-1 bears the N-acetylmethionine mark. The J domain maps to 14–79 (DYYTLLGCDE…ESRARYDHWR (66 aa)). Positions 114 to 156 (EESDKTHTTKMENEECNEQRERKKEELASTAEKTEQKEPKPLE) are enriched in basic and acidic residues. Positions 114 to 169 (EESDKTHTTKMENEECNEQRERKKEELASTAEKTEQKEPKPLEKSVSPQNSDSSGF) are disordered. Phosphoserine is present on residues Ser-160, Ser-166, and Ser-182.

Interacts with HSPA8. Interacts with TPH1. Interacts with TPH2. As to expression, expressed at high levels in brain, heart, and testis, and at reduced levels in kidney and stomach.

The protein resides in the cytoplasm. Functionally, probable co-chaperone that participates in the proper folding of biopterin-dependent aromatic amino acid hydroxylases, which include phenylalanine-4-hydroxylase (PAH), tyrosine 3-monooxygenase (TH) and peripheral and neuronal tryptophan hydroxylases (TPH1 and TPH2). This is DnaJ homolog subfamily C member 12 (DNAJC12) from Homo sapiens (Human).